A 250-amino-acid chain; its full sequence is Probable aquaporin TIP-type RB7-5A (250 aa).

The next 2 membrane-spanning stretches (helical) occupy residues 20–42 (AYVA…AIAY) and 55–77 (GLVA…AANI). An NPA 1 motif is present at residues 83 to 85 (NPA). The next 3 helical transmembrane spans lie at 97–119 (TILT…CLLL), 140–162 (LQGV…ATAA), and 172–194 (IAPI…FSGG). The short motif at 197–199 (NPA) is the NPA 2 element. A helical transmembrane segment spans residues 215–237 (WIYWAGPLIGGGLAGFIYGDVFI).

It belongs to the MIP/aquaporin (TC 1.A.8) family. TIP (TC 1.A.8.10) subfamily. In terms of tissue distribution, roots.

It is found in the vacuole membrane. Functionally, channel protein in tonoplast. These proteins may allow the diffusion of amino acids and/or peptides from the vacuolar compartment to the cytoplasm. This Nicotiana tabacum (Common tobacco) protein is Probable aquaporin TIP-type RB7-5A.